Here is a 149-residue protein sequence, read N- to C-terminus: Nucleoside diphosphate kinase (149 aa).

Residues Lys9, Phe57, Arg85, Thr91, Arg102, and Asn112 each contribute to the ATP site. Residue His115 is the Pros-phosphohistidine intermediate of the active site.

This sequence belongs to the NDK family. As to quaternary structure, homotetramer. Requires Mg(2+) as cofactor.

The protein resides in the cytoplasm. It catalyses the reaction a 2'-deoxyribonucleoside 5'-diphosphate + ATP = a 2'-deoxyribonucleoside 5'-triphosphate + ADP. It carries out the reaction a ribonucleoside 5'-diphosphate + ATP = a ribonucleoside 5'-triphosphate + ADP. Major role in the synthesis of nucleoside triphosphates other than ATP. The ATP gamma phosphate is transferred to the NDP beta phosphate via a ping-pong mechanism, using a phosphorylated active-site intermediate. This Cyanothece sp. (strain PCC 7425 / ATCC 29141) protein is Nucleoside diphosphate kinase.